Consider the following 103-residue polypeptide: Acyl carrier protein (103 aa).

The Carrier domain maps to 14–89 (NIVSNIVQDI…EFIDFTLQTI (76 aa)). Residue Ser-49 is modified to O-(pantetheine 4'-phosphoryl)serine.

Belongs to the acyl carrier protein (ACP) family. 4'-phosphopantetheine is transferred from CoA to a specific serine of apo-ACP by AcpS. This modification is essential for activity because fatty acids are bound in thioester linkage to the sulfhydryl of the prosthetic group.

The protein resides in the plastid. The protein localises to the cyanelle. Its pathway is lipid metabolism; fatty acid biosynthesis. Functionally, carrier of the growing fatty acid chain in fatty acid biosynthesis. In Cyanophora paradoxa, this protein is Acyl carrier protein.